Here is a 317-residue protein sequence, read N- to C-terminus: Ribosomal RNA small subunit methyltransferase H (317 aa).

S-adenosyl-L-methionine is bound by residues 34-36, aspartate 53, phenylalanine 80, aspartate 98, and glutamine 105; that span reads GGH.

It belongs to the methyltransferase superfamily. RsmH family.

The protein resides in the cytoplasm. The catalysed reaction is cytidine(1402) in 16S rRNA + S-adenosyl-L-methionine = N(4)-methylcytidine(1402) in 16S rRNA + S-adenosyl-L-homocysteine + H(+). Functionally, specifically methylates the N4 position of cytidine in position 1402 (C1402) of 16S rRNA. The sequence is that of Ribosomal RNA small subunit methyltransferase H from Tropheryma whipplei (strain TW08/27) (Whipple's bacillus).